The chain runs to 165 residues: MGRAAKRTPGYRVQNRKHKRKPCKDCVAQGLPLTRDAKYPGPRCATHHREFKAARSSTSWETRILATYGITAEEYWAIYEFQGGRCYICQRANGKRKRLSVDHDHKTGIVRGLLCTMCNKYILGWARDCIEMLQRAIDYLRKPPAVQVIGERIAPIEADKLRSQT.

In Mycobacterium (Mycobacteriophage D29), this protein is Gene 59 protein (59).